Here is a 242-residue protein sequence, read N- to C-terminus: uncharacterized protein (242 aa).

2 helical membrane passes run 4–24 (NYQV…YYVV) and 34–54 (LLFG…WLFG). N-linked (GlcNAc...) asparagine; by host glycosylation is present at asparagine 73. Helical transmembrane passes span 74–94 (YTIV…VIGY), 106–126 (VLTV…YGGF), and 162–182 (LDVF…FVMY). N-linked (GlcNAc...) asparagine; by host glycosylation is present at asparagine 185. Transmembrane regions (helical) follow at residues 189–209 (VIGL…APTL) and 217–237 (CLLS…STGI).

Its subcellular location is the membrane. This is an uncharacterized protein from Acanthamoeba polyphaga mimivirus (APMV).